Here is a 234-residue protein sequence, read N- to C-terminus: Melanoregulin (234 aa).

The interval 215–234 (MNQNISGGEDEDEDESEPDD) is disordered. A compositionally biased stretch (acidic residues) spans 222–234 (GEDEDEDESEPDD).

It belongs to the melanoregulin family.

The protein resides in the apical cell membrane. The protein localises to the melanosome membrane. It is found in the lysosome membrane. Its subcellular location is the cytoplasmic vesicle membrane. Its function is as follows. Probably functions as a cargo-recognition protein that couples cytoplasmic vesicles to the transport machinery. Contributes to retrograde melanosome transport from the cell periphery to the center. Overexpression causes accumulation of late endosomes and/or lysosomes at the microtubule organising center (MTOC) at the center of the cell. Probably binds cholesterol and requires the presence of cholesterol in membranes to function in microtubule-mediated retrograde organelle transport. Binds phosphatidylinositol 3-phosphate, phosphatidylinositol 4-phosphate, phosphatidylinositol 5-phosphate and phosphatidylinositol 3,5-bisphosphate. This chain is Melanoregulin (mreg), found in Danio rerio (Zebrafish).